The chain runs to 516 residues: Maturase K (516 aa).

This sequence belongs to the intron maturase 2 family. MatK subfamily.

It localises to the plastid. The protein resides in the chloroplast. Functionally, usually encoded in the trnK tRNA gene intron. Probably assists in splicing its own and other chloroplast group II introns. In Disporum sessile (Japanese fairy bells), this protein is Maturase K.